Consider the following 272-residue polypeptide: 2-amino-3,7-dideoxy-D-threo-hept-6-ulosonate synthase (272 aa).

Residue D33 is the Proton acceptor of the active site. 1-deoxy-D-threo-hexo-2,5-diulose 6-phosphate is bound by residues 33 to 37 (DHGVS) and 153 to 155 (YPR). Y153 serves as the catalytic Proton donor. K184 (schiff-base intermediate with substrate) is an active-site residue. Residues 209–210 (GG) and 237–238 (GR) contribute to the 1-deoxy-D-threo-hexo-2,5-diulose 6-phosphate site.

The protein belongs to the DeoC/FbaB aldolase family. ADHS subfamily. Homodecamer.

The catalysed reaction is 1-deoxy-D-threo-hexo-2,5-diulose 6-phosphate + L-aspartate 4-semialdehyde = 2,3-dioxopropyl phosphate + 2-amino-2,3,7-trideoxy-D-lyxo-hept-6-ulosonate. Catalyzes a transaldol reaction between 6-deoxy-5-ketofructose 1-phosphate (DKFP) and L-aspartate semialdehyde (ASA) with an elimination of hydroxypyruvaldehyde phosphate to yield 2-amino-3,7-dideoxy-D-threo-hept-6-ulosonate (ADH). Plays a key role in an alternative pathway of the biosynthesis of 3-dehydroquinate (DHQ), which is involved in the canonical pathway for the biosynthesis of aromatic amino acids. In Methanococcus maripaludis (strain C5 / ATCC BAA-1333), this protein is 2-amino-3,7-dideoxy-D-threo-hept-6-ulosonate synthase.